Here is a 1604-residue protein sequence, read N- to C-terminus: Transposon Ty1-DR4 Gag-Pol polyprotein (1604 aa).

3 stretches are compositionally biased toward polar residues: residues 1-23, 48-60, and 127-152; these read MESQQLSQHSPISHGSACASVTS, TKANSQQTTTPAS, and QSQFPQYPSSVGTPLSTPSPESGNTF. 3 disordered regions span residues 1-93, 126-174, and 352-421; these read MESQ…MMTQ, PQSQ…PPPM, and GSRN…SKST. The segment covering 153 to 165 has biased composition (low complexity); the sequence is TDSSSADSDMTST. An RNA-binding region spans residues 299–401; the sequence is NNGIHINNKV…NSKSKTARAH (103 aa). Residues 402-418 are compositionally biased toward low complexity; it reads NVSTSNNSPSTDNDSIS. Phosphoserine is present on serine 416. Catalysis depends on aspartate 461, which acts as the For protease activity; shared with dimeric partner. Residues 583 to 640 form an integrase-type zinc finger-like region; it reads NVHTSESTRKYPYPFIHRMLAHANAQTIRYSLKNNTITYFNESDVDWSSAIDYQCPDC. The region spanning 660 to 835 is the Integrase catalytic domain; the sequence is NSYEPFQYLH…AGLDISTLLP (176 aa). Mg(2+) contacts are provided by aspartate 671 and aspartate 736. Disordered stretches follow at residues 956 to 1087, 1092 to 1111, and 1130 to 1187; these read SKAV…ETEK, RSPSIDASPPENNSSHNIVP, and DLPL…DNET. Residues 960–969 are compositionally biased toward low complexity; sequence SPTDSTPPST. Residues 1005–1015 show a composition bias toward polar residues; the sequence is STPQISNIEST. Basic and acidic residues predominate over residues 1038-1053; it reads ESSHASKSKDFRHSDS. 2 stretches are compositionally biased toward polar residues: residues 1054-1082 and 1101-1111; these read YSENETNHTNVPISSTGGTNNKTVPQISD and PENNSSHNIVP. Positions 1178–1212 match the Bipartite nuclear localization signal motif; the sequence is KKRSLEDNETEIKVSRDTWNTKNMRSLEPPRSKKR. The 139-residue stretch at 1338 to 1476 folds into the Reverse transcriptase Ty1/copia-type domain; that stretch reads NNYYITQLDI…DILGLEIKYQ (139 aa). Mg(2+)-binding residues include aspartate 1346, aspartate 1427, and aspartate 1428.

In terms of assembly, the capsid protein forms a homotrimer, from which the VLPs are assembled. The protease is a homodimer, whose active site consists of two apposed aspartic acid residues. Post-translationally, initially, virus-like particles (VLPs) are composed of the structural unprocessed proteins Gag and Gag-Pol, and also contain the host initiator methionine tRNA (tRNA(i)-Met) which serves as a primer for minus-strand DNA synthesis, and a dimer of genomic Ty RNA. Processing of the polyproteins occurs within the particle and proceeds by an ordered pathway, called maturation. First, the protease (PR) is released by autocatalytic cleavage of the Gag-Pol polyprotein yielding capsid protein p45 and a Pol-p154 precursor protein. This cleavage is a prerequisite for subsequent processing of Pol-p154 at the remaining sites to release the mature structural and catalytic proteins. Maturation takes place prior to the RT reaction and is required to produce transposition-competent VLPs.

The protein resides in the cytoplasm. It is found in the nucleus. It catalyses the reaction DNA(n) + a 2'-deoxyribonucleoside 5'-triphosphate = DNA(n+1) + diphosphate. The enzyme catalyses Endonucleolytic cleavage to 5'-phosphomonoester.. Its function is as follows. Capsid protein (CA) is the structural component of the virus-like particle (VLP), forming the shell that encapsulates the retrotransposons dimeric RNA genome. The particles are assembled from trimer-clustered units and there are holes in the capsid shells that allow for the diffusion of macromolecules. CA also has nucleocapsid-like chaperone activity, promoting primer tRNA(i)-Met annealing to the multipartite primer-binding site (PBS), dimerization of Ty1 RNA and initiation of reverse transcription. In terms of biological role, the aspartyl protease (PR) mediates the proteolytic cleavages of the Gag and Gag-Pol polyproteins after assembly of the VLP. Reverse transcriptase/ribonuclease H (RT) is a multifunctional enzyme that catalyzes the conversion of the retro-elements RNA genome into dsDNA within the VLP. The enzyme displays a DNA polymerase activity that can copy either DNA or RNA templates, and a ribonuclease H (RNase H) activity that cleaves the RNA strand of RNA-DNA heteroduplexes during plus-strand synthesis and hydrolyzes RNA primers. The conversion leads to a linear dsDNA copy of the retrotransposon that includes long terminal repeats (LTRs) at both ends. Functionally, integrase (IN) targets the VLP to the nucleus, where a subparticle preintegration complex (PIC) containing at least integrase and the newly synthesized dsDNA copy of the retrotransposon must transit the nuclear membrane. Once in the nucleus, integrase performs the integration of the dsDNA into the host genome. The polypeptide is Transposon Ty1-DR4 Gag-Pol polyprotein (TY1B-DR4) (Saccharomyces cerevisiae (strain ATCC 204508 / S288c) (Baker's yeast)).